The primary structure comprises 264 residues: NADH-quinone oxidoreductase subunit I 2 (264 aa).

4Fe-4S ferredoxin-type domains lie at 57–86 (GFLE…ISLE) and 98–127 (TQFD…HTRE). [4Fe-4S] cluster is bound by residues cysteine 66, cysteine 69, cysteine 72, cysteine 76, cysteine 107, cysteine 110, cysteine 113, and cysteine 117. Residues 183-264 (APQFLPPEPP…AAPAANPESK (82 aa)) form a disordered region. Residues 197 to 264 (AKPAAKAAPA…AAPAANPESK (68 aa)) show a composition bias toward low complexity.

This sequence belongs to the complex I 23 kDa subunit family. NDH-1 is composed of 14 different subunits. Subunits NuoA, H, J, K, L, M, N constitute the membrane sector of the complex. [4Fe-4S] cluster is required as a cofactor.

Its subcellular location is the cell inner membrane. It carries out the reaction a quinone + NADH + 5 H(+)(in) = a quinol + NAD(+) + 4 H(+)(out). Its function is as follows. NDH-1 shuttles electrons from NADH, via FMN and iron-sulfur (Fe-S) centers, to quinones in the respiratory chain. The immediate electron acceptor for the enzyme in this species is believed to be ubiquinone. Couples the redox reaction to proton translocation (for every two electrons transferred, four hydrogen ions are translocated across the cytoplasmic membrane), and thus conserves the redox energy in a proton gradient. The sequence is that of NADH-quinone oxidoreductase subunit I 2 from Anaeromyxobacter dehalogenans (strain 2CP-C).